A 481-amino-acid chain; its full sequence is G-protein coupled receptor 37-like 1 (481 aa).

The signal sequence occupies residues 1–25 (MRWLWPLAVSLAVILAVGLSRVSGG). 2 disordered regions span residues 26–58 (APLHLGRHRAETQEQQSRSKRGTEDEEAKGVQQ) and 70–108 (PIHPAGLQPTKPLVATSPNPGKDGGTPDSGQELRGNLTG). Over 26–134 (APLHLGRHRA…ESSYSAYAIM (109 aa)) the chain is Extracellular. 2 O-linked (GalNAc...) threonine glycosylation sites follow: T79 and T85. O-linked (GalNAc...) serine glycosylation is present at S86. T95 carries an O-linked (GalNAc...) threonine glycan. N-linked (GlcNAc...) asparagine glycosylation is present at N105. T107 is a glycosylation site (O-linked (GalNAc...) threonine). Residues 135-155 (LLALVVFAVGIVGNLSVMCIV) form a helical membrane-spanning segment. Residues 156-167 (WHSYYLKSAWNS) lie on the Cytoplasmic side of the membrane. Residues 168 to 188 (ILASLALWDFLVLFFCLPIVI) traverse the membrane as a helical segment. At 189–205 (FNEITKQRLLGDVSCRA) the chain is on the extracellular side. C203 and C286 are oxidised to a cystine. A helical transmembrane segment spans residues 206-226 (VPFMEVSSLGVTTFSLCALGI). Over 227–251 (DRFHVATSTLPKVRPIERCQSILAK) the chain is Cytoplasmic. The helical transmembrane segment at 252 to 272 (LAVIWVGSMTLAVPELLLWQL) threads the bilayer. Residues 273–310 (AQEPAPTMGTLDSCIMKPSASLPESLYSLVMTYQNARM) lie on the Extracellular side of the membrane. Residues 311-331 (WWYFGCYFCLPILFTVTCQLV) form a helical membrane-spanning segment. Residues 332–361 (TWRVRGPPGRKSECRASKHEQCESQLNSTV) lie on the Cytoplasmic side of the membrane. Residues 362–382 (VGLTVVYAFCTLPENVCNIVV) traverse the membrane as a helical segment. The Extracellular portion of the chain corresponds to 383–398 (AYLSTELTRQTLDLLG). A helical membrane pass occupies residues 399–419 (LINQFSTFFKGAITPVLLLCI). Topologically, residues 420 to 481 (CRPLGQAFLD…PPLLPLGTPC (62 aa)) are cytoplasmic. Position 471 is a phosphoserine (S471). T479 carries the phosphothreonine modification.

This sequence belongs to the G-protein coupled receptor 1 family. As to quaternary structure, interacts with the PTCH1 receptor. Post-translationally, O-glycosylated. Undergoes metalloprotease-mediated cleavage which reduces its constitutive activity. In terms of processing, ubiquitinated. Expressed in primary cortical astrocytes (at protein level). Expressed in the central nervous system.

It is found in the cell membrane. Its subcellular location is the cell projection. It localises to the cilium membrane. Functionally, G-protein coupled receptor. Has been shown to bind the neuroprotective and glioprotective factor prosaposin (PSAP), leading to endocytosis followed by an ERK phosphorylation cascade. However, other studies have shown that prosaposin does not increase activity. It has been suggested that GPR37L1 is a constitutively active receptor which signals through the guanine nucleotide-binding protein G(s) subunit alpha. Participates in the regulation of postnatal cerebellar development by modulating the Shh pathway. Regulates baseline blood pressure in females and protects against cardiovascular stress in males. Mediates inhibition of astrocyte glutamate transporters and reduction in neuronal N-methyl-D-aspartate receptor activity. The sequence is that of G-protein coupled receptor 37-like 1 (GPR37L1) from Homo sapiens (Human).